Reading from the N-terminus, the 95-residue chain is Aspartyl/glutamyl-tRNA(Asn/Gln) amidotransferase subunit C (95 aa).

This sequence belongs to the GatC family. In terms of assembly, heterotrimer of A, B and C subunits.

The catalysed reaction is L-glutamyl-tRNA(Gln) + L-glutamine + ATP + H2O = L-glutaminyl-tRNA(Gln) + L-glutamate + ADP + phosphate + H(+). The enzyme catalyses L-aspartyl-tRNA(Asn) + L-glutamine + ATP + H2O = L-asparaginyl-tRNA(Asn) + L-glutamate + ADP + phosphate + 2 H(+). In terms of biological role, allows the formation of correctly charged Asn-tRNA(Asn) or Gln-tRNA(Gln) through the transamidation of misacylated Asp-tRNA(Asn) or Glu-tRNA(Gln) in organisms which lack either or both of asparaginyl-tRNA or glutaminyl-tRNA synthetases. The reaction takes place in the presence of glutamine and ATP through an activated phospho-Asp-tRNA(Asn) or phospho-Glu-tRNA(Gln). This Chloroherpeton thalassium (strain ATCC 35110 / GB-78) protein is Aspartyl/glutamyl-tRNA(Asn/Gln) amidotransferase subunit C.